The primary structure comprises 216 residues: Peptide methionine sulfoxide reductase MsrA (216 aa).

Cys-54 is an active-site residue.

Belongs to the MsrA Met sulfoxide reductase family.

The catalysed reaction is L-methionyl-[protein] + [thioredoxin]-disulfide + H2O = L-methionyl-(S)-S-oxide-[protein] + [thioredoxin]-dithiol. The enzyme catalyses [thioredoxin]-disulfide + L-methionine + H2O = L-methionine (S)-S-oxide + [thioredoxin]-dithiol. Has an important function as a repair enzyme for proteins that have been inactivated by oxidation. Catalyzes the reversible oxidation-reduction of methionine sulfoxide in proteins to methionine. This Xanthomonas oryzae pv. oryzae (strain PXO99A) protein is Peptide methionine sulfoxide reductase MsrA.